A 429-amino-acid polypeptide reads, in one-letter code: Stromal membrane-associated protein 2 (429 aa).

The Arf-GAP domain maps to Gln13–Lys137. The segment at Cys28–Cys51 adopts a C4-type zinc-finger fold. Phosphoserine is present on Ser127. A compositionally biased stretch (basic and acidic residues) spans Asp138–Leu172. 2 disordered regions span residues Asp138–Lys181 and Val217–Leu263. Residues Met163–Met232 are interaction with clathrin heavy chains. A compositionally biased stretch (low complexity) spans Val217 to Ser231. Phosphoserine occurs at positions 219, 223, 225, 231, and 240. The segment covering Ser253–Leu263 has biased composition (basic and acidic residues). Residues Met340–Lys429 form an interaction with PICALM region.

Interacts with ARF1. Interacts with PICALM and clathrin heavy chains.

The protein resides in the cytoplasm. Functionally, GTPase activating protein that acts on ARF1. Can also activate ARF6 (in vitro). May play a role in clathrin-dependent retrograde transport from early endosomes to the trans-Golgi network. The chain is Stromal membrane-associated protein 2 (SMAP2) from Bos taurus (Bovine).